We begin with the raw amino-acid sequence, 503 residues long: Cobyric acid synthase (503 aa).

The 194-residue stretch at 260–453 (KIGVAAIYFP…FHALFDESSV (194 aa)) folds into the GATase cobBQ-type domain. Residue C341 is the Nucleophile of the active site. Residue H445 is part of the active site.

The protein belongs to the CobB/CobQ family. CobQ subfamily.

Its pathway is cofactor biosynthesis; adenosylcobalamin biosynthesis. Its function is as follows. Catalyzes amidations at positions B, D, E, and G on adenosylcobyrinic A,C-diamide. NH(2) groups are provided by glutamine, and one molecule of ATP is hydrogenolyzed for each amidation. In Pelodictyon phaeoclathratiforme (strain DSM 5477 / BU-1), this protein is Cobyric acid synthase.